The sequence spans 91 residues: Defensin-like protein 95 (91 aa).

Positions 1–27 (MGSLKLSTFAIVVCLSILLISPIEVNG) are cleaved as a signal peptide. 4 cysteine pairs are disulfide-bonded: cysteine 31–cysteine 76, cysteine 38–cysteine 63, cysteine 47–cysteine 73, and cysteine 51–cysteine 75.

The protein belongs to the DEFL family.

Its subcellular location is the secreted. This chain is Defensin-like protein 95, found in Arabidopsis thaliana (Mouse-ear cress).